Here is a 172-residue protein sequence, read N- to C-terminus: Ribosome maturation factor RimM (172 aa).

The PRC barrel domain occupies proline 98 to leucine 171.

The protein belongs to the RimM family. Binds ribosomal protein uS19.

Its subcellular location is the cytoplasm. Functionally, an accessory protein needed during the final step in the assembly of 30S ribosomal subunit, possibly for assembly of the head region. Essential for efficient processing of 16S rRNA. May be needed both before and after RbfA during the maturation of 16S rRNA. It has affinity for free ribosomal 30S subunits but not for 70S ribosomes. This Levilactobacillus brevis (strain ATCC 367 / BCRC 12310 / CIP 105137 / JCM 1170 / LMG 11437 / NCIMB 947 / NCTC 947) (Lactobacillus brevis) protein is Ribosome maturation factor RimM.